The chain runs to 123 residues: MKLLLLALPILVLLPQVIPAYGGEKKCWNRSGHCRKQCKDGEAVKETCKNHRACCVPSNEDHRRLPTTSPTPLSDSTPGIIDNILTIRFTTDYFEISSKKDMVEESEAGQGTQTSPPNVHHTS.

The first 19 residues, 1 to 19 (MKLLLLALPILVLLPQVIP), serve as a signal peptide directing secretion. 3 disulfides stabilise this stretch: Cys27/Cys54, Cys34/Cys48, and Cys38/Cys55. A propeptide spanning residues 65 to 123 (LPTTSPTPLSDSTPGIIDNILTIRFTTDYFEISSKKDMVEESEAGQGTQTSPPNVHHTS) is cleaved from the precursor. Residues 100–123 (KDMVEESEAGQGTQTSPPNVHHTS) are disordered. A compositionally biased stretch (polar residues) spans 109-123 (GQGTQTSPPNVHHTS).

The protein belongs to the beta-defensin family. In terms of processing, the three-dimensional structure formed by the three intramolecular disulfide bridges is indispensable for antimicrobial activity. High-level and epididymis-specific expression. Most abundant in the epithelium of the caput and is also present in the lumen and bound to sperm.

Its subcellular location is the secreted. In terms of biological role, host defense peptide that exhibits antimicrobial activity against both Gram-negative bacteria, such as E.coli and S.typhimurium, and Gram-positive bacteria, such as S.aureus and B.subtilis. Inhibits cell adhesion of E.coli on intestinal epithelial enterocytes. Causes rapid permeabilization of both the outer and inner membrane of E.coli, leading to morphological alterations on the bacterial surface. Binds to bacterial lipopolysaccharides (LPS) with high affinity, and may thereby be involved in immunoregulation through LPS neutralization. May contribute to epididymal innate immunity and protect the sperm against attack by microorganisms. This is Defensin beta 118 (DEFB118) from Macaca mulatta (Rhesus macaque).